A 328-amino-acid polypeptide reads, in one-letter code: P2Y purinoceptor 6 (328 aa).

Over 1 to 27 (MEWDNGTGQALGLPPTTCVYRENFKQL) the chain is Extracellular. Residue N5 is glycosylated (N-linked (GlcNAc...) asparagine). Residues 28-48 (LLPPVYSAVLAAGLPLNICVI) form a helical membrane-spanning segment. Residues 49-62 (TQICTSRRALTRTA) lie on the Cytoplasmic side of the membrane. A helical membrane pass occupies residues 63–83 (VYTLNLALADLLYACSLPLLI). The Extracellular portion of the chain corresponds to 84 to 101 (YNYAQGDHWPFGDFACRL). Cysteines 99 and 177 form a disulfide. Residues 102 to 122 (VRFLFYANLHGSILFLTCISF) form a helical membrane-spanning segment. Residues 123-144 (QRYLGICHPLAPWHKRGGRRAA) lie on the Cytoplasmic side of the membrane. Residues 145 to 165 (WLVCVAVWLAVTTQCLPTAIF) form a helical membrane-spanning segment. Over 166–194 (AATGIQRNRTVCYDLSPPALATHYMPYGM) the chain is Extracellular. Residues 195–215 (ALTVIGFLLPFAALLACYCLL) form a helical membrane-spanning segment. Topologically, residues 216–236 (ACRLCRQDGPAEPVAQERRGK) are cytoplasmic. Residues 237–257 (AARMAVVVAAAFAISFLPFHI) form a helical membrane-spanning segment. Topologically, residues 258–280 (TKTAYLAVRSTPGVPCTVLEAFA) are extracellular. The chain crosses the membrane as a helical span at residues 281–303 (AAYKGTRPFASANSVLDPILFYF). Over 304 to 328 (TQKKFRRRPHELLQKLTAKWQRQGR) the chain is Cytoplasmic.

The protein belongs to the G-protein coupled receptor 1 family.

It localises to the cell membrane. Functionally, receptor for extracellular UDP &gt; UTP &gt; ATP. The activity of this receptor is mediated by G proteins which activate a phosphatidylinositol-calcium second messenger system. In Homo sapiens (Human), this protein is P2Y purinoceptor 6 (P2RY6).